The sequence spans 480 residues: Coronin-2B (480 aa).

WD repeat units follow at residues 29–77, 78–127, 128–170, 171–212, 213–259, 260–305, and 306–345; these read HCFD…GRIE, PNYP…RNMT, EALL…LDVG, EPVK…PRSG, RVLQ…EDLS, MPLI…TEKP, and YLSYLMEFRSPAPQKGLGVMPKHGLDVSACEVFRFYKLVT. A coiled-coil region spans residues 436–479; it reads NELLRMFFRQQDEIRRLKEELAQKDIRIRQLQLELKNLRNSPKN.

Belongs to the WD repeat coronin family. In terms of assembly, binds to F-actin and to vinculin. Expressed predominantly in brain.

The protein resides in the cytoplasm. It localises to the cytoskeleton. In terms of biological role, may play a role in the reorganization of neuronal actin structure. This chain is Coronin-2B (CORO2B), found in Homo sapiens (Human).